A 399-amino-acid polypeptide reads, in one-letter code: MAKEKYERTKPHVNIGTIGHVDHGKTTLTAAISKVLHDEYPDLNPEYDFNQIDAAPEEQQRGITINIAHIEYQTAKRHYAHVDCPGHADFVKNMITGAAQMDGAILVVAATDGPMAQTREHVLLAPQVGVPKILVALNKCDMVDDEELIELVEEEVRDLLDENGFDRDCPVVHTSAYGALHDDAPDHDKWVATIKELMDDVDEYIPTPVHDLDKPFLMPIEDVFTISGRGTVVTGRVERGKLPINTNVEIVGIRPTQTTTFTSIETFHKQMDECEAGDNTGLLLRGINRTDVERGQVVAAPGSVTPHTKFEGEVYVLTKDEGGRHSPFFSNYRPQFYFRTTDVTGVITLPEGVEMVQPGDHATFTVELIQPIAMEEGLTFAVREGGHTVGSGRVTKILA.

The tr-type G domain occupies K10 to V209. The tract at residues G19 to T26 is G1. G19–T26 provides a ligand contact to GTP. T26 serves as a coordination point for Mg(2+). A G2 region spans residues G62–N66. A G3 region spans residues D83–G86. GTP contacts are provided by residues D83–H87 and N138–D141. Residues N138–D141 are G4. Residues S175–Y177 are G5.

This sequence belongs to the TRAFAC class translation factor GTPase superfamily. Classic translation factor GTPase family. EF-Tu/EF-1A subfamily. Monomer.

The protein resides in the cytoplasm. The catalysed reaction is GTP + H2O = GDP + phosphate + H(+). GTP hydrolase that promotes the GTP-dependent binding of aminoacyl-tRNA to the A-site of ribosomes during protein biosynthesis. The chain is Elongation factor Tu from Bifidobacterium animalis subsp. lactis (strain AD011).